The primary structure comprises 152 residues: MTKERTFIAIKPDGVQRGYVSEILGRFEKKGFKLVGLKQLIPSKELAQNHYGVHRERPFFGDLVDFISSGPVVAMVWEGEGVILSARKLIGATKPLEAEPGTIRGDLAIDIGRNIIHGSDGEDTAKFEINLWFNEEELCEWETSDSKWRSEN.

ATP contacts are provided by K11, F59, R87, T93, R104, and N114. Catalysis depends on H117, which acts as the Pros-phosphohistidine intermediate.

Belongs to the NDK family. In terms of assembly, homotetramer. Mg(2+) serves as cofactor.

The protein resides in the cytoplasm. The catalysed reaction is a 2'-deoxyribonucleoside 5'-diphosphate + ATP = a 2'-deoxyribonucleoside 5'-triphosphate + ADP. It carries out the reaction a ribonucleoside 5'-diphosphate + ATP = a ribonucleoside 5'-triphosphate + ADP. In terms of biological role, major role in the synthesis of nucleoside triphosphates other than ATP. The ATP gamma phosphate is transferred to the NDP beta phosphate via a ping-pong mechanism, using a phosphorylated active-site intermediate. This chain is Nucleoside diphosphate kinase, found in Prochlorococcus marinus (strain AS9601).